We begin with the raw amino-acid sequence, 577 residues long: 9-cis-epoxycarotenoid dioxygenase NCED6, chloroplastic (577 aa).

The interval 1 to 25 (MQHSLRSDLLPTKTSPRSHLLPQPK) is disordered. Fe cation is bound by residues H276, H325, H390, and H563.

Belongs to the carotenoid oxygenase family. Requires Fe(2+) as cofactor. In terms of tissue distribution, expressed before fertilization in male and female gametophytes, and then immediately after pollination, restricted to seed endosperm.

Its subcellular location is the plastid. It is found in the chloroplast stroma. The enzyme catalyses a 9-cis-epoxycarotenoid + O2 = a 12'-apo-carotenal + 2-cis,4-trans-xanthoxin. It carries out the reaction 9-cis-violaxanthin + O2 = (3S,5R,6S)-5,6-epoxy-3-hydroxy-5,6-dihydro-12'-apo-beta-caroten-12'-al + 2-cis,4-trans-xanthoxin. The catalysed reaction is 9'-cis-neoxanthin + O2 = (3S,5R,6R)-3,5-dihydroxy-6,7-didehydro-5,6-dihydro-12'-apo-beta-caroten-12'-al + 2-cis,4-trans-xanthoxin. In terms of biological role, has a 11,12(11',12') 9-cis epoxycarotenoid cleavage activity. Catalyzes the first step of abscisic-acid biosynthesis from carotenoids. Contributes probably to abscisic acid synthesis for the induction of seed dormancy. In Arabidopsis thaliana (Mouse-ear cress), this protein is 9-cis-epoxycarotenoid dioxygenase NCED6, chloroplastic (NCED6).